The primary structure comprises 253 residues: PAXIP1-associated glutamate-rich protein 1 (253 aa).

Disordered stretches follow at residues 1-109 and 128-253; these read MSLV…MPPP and QAEI…QRKY. Over residues 51 to 62 the composition is skewed to basic and acidic residues; it reads EGGREEAEHEGS. Residues 116-160 are sufficient for interaction with NCOA1; that stretch reads YELLAAHGTLELQAEILPRRPPTPEAQSEEERSDEEPEAKEEEEE. A Phosphothreonine modification is found at threonine 138. The span at 142–159 shows a compositional bias: acidic residues; the sequence is QSEEERSDEEPEAKEEEE. 2 positions are modified to phosphoserine: serine 143 and serine 148. Positions 161 to 253 are sufficient for interaction with ESR1; it reads KPHMPTEFDF…GSLFPRQRKY (93 aa). The segment covering 195–223 has biased composition (basic and acidic residues); it reads QKREARLDKVLSDMKRHKKLEEQILRTGR. Position 237 is a phosphoserine (serine 237).

In terms of assembly, component of the KMT2 family MLL2/MLL3 complex, at least composed of the histone methyltransferases KMT2D and/or KMT2C, the common complex subunits ASH2L, RBBP5, WDR5 and DPY30, and the complex type-specific subunits PAXIP1/PTIP, PAGR1, NCOA6 and KDM6A; PAXIP1 is required for the association with the MLL2/MLL3 complex. Forms a constitutive complex with PAXIP1/PTIP independently of the MLL2/MLL3 complex. Interacts with NCOA1, ESR1, NR3C1, AR.

The protein localises to the nucleus. Its function is as follows. Its association with the histone methyltransferase MLL2/MLL3 complex is suggesting a role in epigenetic transcriptional activation. However, in association with PAXIP1/PTIP is proposed to function at least in part independently of the MLL2/MLL3 complex. Proposed to be recruited by PAXIP1 to sites of DNA damage where the PAGR1:PAXIP1 complex is required for cell survival in response to DNA damage independently of the MLL2/MLL3 complex. However, its function in DNA damage has been questioned. During immunoglobulin class switching in activated B-cells is involved in transcription regulation of downstream switch regions at the immunoglobulin heavy-chain (Igh) locus independently of the MLL2/MLL3 complex. Involved in both estrogen receptor-regulated gene transcription and estrogen-stimulated G1/S cell-cycle transition. Acts as a transcriptional cofactor for nuclear hormone receptors. Inhibits the induction properties of several steroid receptors such as NR3C1, AR and PPARG; the mechanism of inhibition appears to be gene-dependent. The protein is PAXIP1-associated glutamate-rich protein 1 (PAGR1) of Bos taurus (Bovine).